The following is a 428-amino-acid chain: Enolase (428 aa).

Q165 serves as a coordination point for (2R)-2-phosphoglycerate. E207 acts as the Proton donor in catalysis. Mg(2+) is bound by residues D244, E285, and D312. K337, R366, S367, and K388 together coordinate (2R)-2-phosphoglycerate. The active-site Proton acceptor is the K337.

This sequence belongs to the enolase family. As to quaternary structure, component of the RNA degradosome, a multiprotein complex involved in RNA processing and mRNA degradation. It depends on Mg(2+) as a cofactor.

The protein localises to the cytoplasm. It is found in the secreted. The protein resides in the cell surface. The enzyme catalyses (2R)-2-phosphoglycerate = phosphoenolpyruvate + H2O. The protein operates within carbohydrate degradation; glycolysis; pyruvate from D-glyceraldehyde 3-phosphate: step 4/5. Its function is as follows. Catalyzes the reversible conversion of 2-phosphoglycerate (2-PG) into phosphoenolpyruvate (PEP). It is essential for the degradation of carbohydrates via glycolysis. This chain is Enolase, found in Coxiella burnetii (strain Dugway 5J108-111).